A 375-amino-acid chain; its full sequence is Alcohol dehydrogenase 1 (375 aa).

Ser2 bears the N-acetylserine mark. Zn(2+) is bound by residues Cys47, His68, Cys98, Cys101, Cys104, Cys112, and Cys175. NAD(+) contacts are provided by residues 200–205, Asp224, and Lys229; that span reads WSGRVG. Lys234 is modified (N6-succinyllysine). Residue 293-295 participates in NAD(+) binding; sequence VGV. Lys340 is subject to N6-succinyllysine. Arg370 is a binding site for NAD(+).

Belongs to the zinc-containing alcohol dehydrogenase family. Class-I subfamily. In terms of assembly, homodimer. The cofactor is Zn(2+).

It is found in the cytoplasm. The catalysed reaction is a primary alcohol + NAD(+) = an aldehyde + NADH + H(+). The enzyme catalyses a secondary alcohol + NAD(+) = a ketone + NADH + H(+). The sequence is that of Alcohol dehydrogenase 1 (ADH1) from Geomys bursarius (Plains pocket gopher).